Consider the following 501-residue polypeptide: Lysine--tRNA ligase (501 aa).

Mg(2+) is bound by residues Glu-411 and Glu-418.

This sequence belongs to the class-II aminoacyl-tRNA synthetase family. As to quaternary structure, homodimer. It depends on Mg(2+) as a cofactor.

The protein localises to the cytoplasm. It carries out the reaction tRNA(Lys) + L-lysine + ATP = L-lysyl-tRNA(Lys) + AMP + diphosphate. This Aliivibrio fischeri (strain ATCC 700601 / ES114) (Vibrio fischeri) protein is Lysine--tRNA ligase.